We begin with the raw amino-acid sequence, 332 residues long: L-lactate dehydrogenase A chain (332 aa).

Residues 29–57 (GMVGMASAVSILLKDLCDELALVDVMEDK) and Arg99 contribute to the NAD(+) site. Residues Arg106, Asn138, and Arg169 each contribute to the substrate site. Position 138 (Asn138) interacts with NAD(+). The Proton acceptor role is filled by His193. Residue Thr248 participates in substrate binding.

Belongs to the LDH/MDH superfamily. LDH family. As to quaternary structure, homotetramer.

The protein localises to the cytoplasm. The catalysed reaction is (S)-lactate + NAD(+) = pyruvate + NADH + H(+). It participates in fermentation; pyruvate fermentation to lactate; (S)-lactate from pyruvate: step 1/1. Its function is as follows. Interconverts simultaneously and stereospecifically pyruvate and lactate with concomitant interconversion of NADH and NAD(+). This is L-lactate dehydrogenase A chain (ldha) from Sphyraena idiastes (Pelican barracuda).